A 185-amino-acid polypeptide reads, in one-letter code: Ribosome-recycling factor (185 aa).

It belongs to the RRF family.

Its subcellular location is the cytoplasm. Responsible for the release of ribosomes from messenger RNA at the termination of protein biosynthesis. May increase the efficiency of translation by recycling ribosomes from one round of translation to another. This Clostridium botulinum (strain Alaska E43 / Type E3) protein is Ribosome-recycling factor.